Reading from the N-terminus, the 238-residue chain is MGKKLLQQRAGRGNINFRNPGWLRVGKVRYPTITGHHIAKVVDILHNPGMTEPVAKVKLDTGIQFFIPAVQGLISGQKIEVGEGSPASLGNIVPAKDLPEGVYVSNVELHRGDGGRYARTAGSYAIVVGKSEGKVILRLPSGKIKEIDENALVTVGTVAGGGVLEKPLLKAGNNYWKYKVKATKWPDVRGVAMNVVSHPHGGGLHQSVSRSSTVARNTPPGRKVGHIAARRTGRRDRK.

The segment at 199-238 is disordered; that stretch reads PHGGGLHQSVSRSSTVARNTPPGRKVGHIAARRTGRRDRK. The segment covering 206 to 216 has biased composition (polar residues); it reads QSVSRSSTVAR. The segment covering 223-238 has biased composition (basic residues); that stretch reads KVGHIAARRTGRRDRK.

Belongs to the universal ribosomal protein uL2 family. Part of the 50S ribosomal subunit. Forms a bridge to the 30S subunit in the 70S ribosome.

One of the primary rRNA binding proteins. Required for association of the 30S and 50S subunits to form the 70S ribosome, for tRNA binding and peptide bond formation. It has been suggested to have peptidyltransferase activity; this is somewhat controversial. Makes several contacts with the 16S rRNA in the 70S ribosome. The sequence is that of Large ribosomal subunit protein uL2 from Metallosphaera sedula (strain ATCC 51363 / DSM 5348 / JCM 9185 / NBRC 15509 / TH2).